Reading from the N-terminus, the 1733-residue chain is ATP-binding cassette sub-family A member 17 (1733 aa).

A run of 7 helical transmembrane segments spans residues 22–42 (TLIT…VLYL), 262–282 (FPLL…NSVL), 306–326 (AWFI…TVLF), 342–362 (TLIF…AFMM), 372–392 (GTVI…YITF), 403–423 (ILSC…ISLF), and 444–464 (FAQV…IAFL). The ABC transporter 1 domain occupies 519 to 752 (IEIQHLYKVF…YGAGYYMTII (234 aa)). Residue 555-562 (GHNGAGKT) participates in ATP binding. The N-linked (GlcNAc...) asparagine glycan is linked to N609. Transmembrane regions (helical) follow at residues 906 to 926 (LVLS…LTFF), 1082 to 1102 (LVVN…ILTV), 1128 to 1148 (LLWD…VFLW), 1160 to 1180 (IPAV…LVYT), 1192 to 1212 (CVKL…LVTV), 1230 to 1250 (IFLI…YYNF), and 1287 to 1307 (IGKY…MLFL). The ABC transporter 2 domain maps to 1366–1599 (LVVKEVSKVY…FGISYSLQAK (234 aa)). 1401-1408 (GLNGAGKT) is a binding site for ATP. Positions 1681 to 1692 (ESSTKEQIQQEQ) are enriched in polar residues. Residues 1681–1733 (ESSTKEQIQQEQAVLASPSPPSNSRPISSPPSRLSSPTPKPLPSPPPSEPILL) are disordered. A compositionally biased stretch (low complexity) spans 1704 to 1717 (SRPISSPPSRLSSP). Over residues 1718–1733 (TPKPLPSPPPSEPILL) the composition is skewed to pro residues.

This sequence belongs to the ABC transporter superfamily. ABCA family. N-glycosylated. In terms of tissue distribution, in the testis, detected predominantly in elongated spermatids at the late stage of germ cell development and in sperm, with no expression detected in immature germ cells such as spermatogonia and spermatocytes or in somatic cells such as Sertoli cells (at protein level). Expressed in the head and tail midpiece of elongated spermatids and sperm (at protein level). Expressed exclusively in the testis.

Its subcellular location is the endoplasmic reticulum membrane. It localises to the cytoplasm. The enzyme catalyses cholesterol(in) + ATP + H2O = cholesterol(out) + ADP + phosphate + H(+). Promotes cholesterol efflux from sperm which renders sperm capable of fertilization. Has also been shown to decrease levels of intracellular esterified neutral lipids including cholesteryl esters, fatty acid esters and triacylglycerols. The sequence is that of ATP-binding cassette sub-family A member 17 from Mus musculus (Mouse).